Here is a 240-residue protein sequence, read N- to C-terminus: 14-3-3 protein 3 (240 aa).

The protein belongs to the 14-3-3 family. In terms of assembly, interacts with coactosin. Interacts with ACTO/actophorin.

Its subcellular location is the cytoplasm. It localises to the cell projection. The protein localises to the phagocytic cup. In terms of biological role, adapter protein which is required for phagocytosis and motility, probably by regulating actin cytoskeleton dynamics. During phagocytosis, plays a role in the initiation and/or formation of the phagocytic cup and is involved in the recruitment of the actin binding protein coactosin to the phagocytic cup. This is 14-3-3 protein 3 from Entamoeba histolytica (strain ATCC 30459 / HM-1:IMSS / ABRM).